The following is a 209-amino-acid chain: C-type lectin domain family 6 member A (209 aa).

The Cytoplasmic segment spans residues 1–20; the sequence is MVQERQSQGKGVCWTLRLWS. A helical; Signal-anchor for type II membrane protein transmembrane segment spans residues 21 to 43; the sequence is AAVISMLLLSTCFIASCVVTYQF. At 44–209 the chain is on the extracellular side; that stretch reads IMDQPSRRLY…SICEMKKIYL (166 aa). 4 disulfide bridges follow: cysteine 64–cysteine 78, cysteine 79–cysteine 90, cysteine 107–cysteine 202, and cysteine 176–cysteine 194. Residues 86–203 enclose the C-type lectin domain; that stretch reads FGSSCYLIST…CDSKHNSICE (118 aa). Residues valine 116, asparagine 118, and glutamate 122 each contribute to the Ca(2+) site. N-linked (GlcNAc...) asparagine glycosylation is present at asparagine 131. Glutamate 168, asparagine 170, and glutamate 174 together coordinate Ca(2+). Residues 168–170, glutamate 174, tryptophan 182, and 190–191 each bind alpha-D-mannopyranose; these read EPN and ND. The Ca(2+) site is built by asparagine 190, aspartate 191, and glutamate 203.

As to quaternary structure, associated with FCER1G. Heterodimer with CLEC4D; this heterodimer forms a pattern recognition receptor (PRR) against fungal infection. In terms of tissue distribution, expressed by the XS52 DC (dendritic cell) line (at protein level). Expressed constitutively by the epidermis, and skin resident DC appear to be the major source of this expression. Expressed in the spleen and thymus. Expression was undetectable in non-DC lines, including macrophage lines (J774 and Raw), T-cell lines (7-17, HDK-1, and D10), B-cell hybridoma (5C5), a keratinocyte line (Pam 212), and a fibroblast line (NS01).

The protein localises to the cell membrane. Calcium-dependent lectin that acts as a pattern recognition receptor (PRR) of the innate immune system: specifically recognizes and binds alpha-mannans on C.albicans hypheas. Binding of C.albicans alpha-mannans to this receptor complex leads to phosphorylation of the immunoreceptor tyrosine-based activation motif (ITAM) of FCER1G, triggering activation of SYK, CARD9 and NF-kappa-B, consequently driving maturation of antigen-presenting cells and shaping antigen-specific priming of T-cells toward effector T-helper 1 and T-helper 17 cell subtypes. Also recognizes, in a mannose-dependent manner, allergens from house dust mite and fungi, by promoting cysteinyl leukotriene production. Recognizes soluble elements from the eggs of Shistosoma mansoni altering adaptive immune responses. The protein is C-type lectin domain family 6 member A of Mus musculus (Mouse).